A 122-amino-acid polypeptide reads, in one-letter code: Small ribosomal subunit protein uS13 (122 aa).

Positions 94–122 (KQLPVRGQRTHTNARTRKGKAKPIAGKKK) are disordered.

It belongs to the universal ribosomal protein uS13 family. As to quaternary structure, part of the 30S ribosomal subunit. Forms a loose heterodimer with protein S19. Forms two bridges to the 50S subunit in the 70S ribosome.

Its function is as follows. Located at the top of the head of the 30S subunit, it contacts several helices of the 16S rRNA. In the 70S ribosome it contacts the 23S rRNA (bridge B1a) and protein L5 of the 50S subunit (bridge B1b), connecting the 2 subunits; these bridges are implicated in subunit movement. Contacts the tRNAs in the A and P-sites. In Methylorubrum populi (strain ATCC BAA-705 / NCIMB 13946 / BJ001) (Methylobacterium populi), this protein is Small ribosomal subunit protein uS13.